Reading from the N-terminus, the 415-residue chain is Serine--tRNA ligase (415 aa).

231–233 provides a ligand contact to L-serine; it reads TAE. ATP is bound at residue 262–264; that stretch reads RSE. An L-serine-binding site is contributed by Glu285. 349–352 serves as a coordination point for ATP; it reads EISS. Ser383 is a binding site for L-serine.

The protein belongs to the class-II aminoacyl-tRNA synthetase family. Type-1 seryl-tRNA synthetase subfamily. In terms of assembly, homodimer. The tRNA molecule binds across the dimer.

It is found in the cytoplasm. The catalysed reaction is tRNA(Ser) + L-serine + ATP = L-seryl-tRNA(Ser) + AMP + diphosphate + H(+). It carries out the reaction tRNA(Sec) + L-serine + ATP = L-seryl-tRNA(Sec) + AMP + diphosphate + H(+). Its pathway is aminoacyl-tRNA biosynthesis; selenocysteinyl-tRNA(Sec) biosynthesis; L-seryl-tRNA(Sec) from L-serine and tRNA(Sec): step 1/1. In terms of biological role, catalyzes the attachment of serine to tRNA(Ser). Is also able to aminoacylate tRNA(Sec) with serine, to form the misacylated tRNA L-seryl-tRNA(Sec), which will be further converted into selenocysteinyl-tRNA(Sec). This is Serine--tRNA ligase from Helicobacter pylori (strain HPAG1).